Here is a 163-residue protein sequence, read N- to C-terminus: Lipoprotein signal peptidase (163 aa).

The next 3 helical transmembrane spans lie at 11 to 31, 63 to 83, and 88 to 108; these read ILIAVFVVIFDQVTKYIIATT, KMTFFFIITIIILIALVYFFI, and YNLFMQVAISLLFAGALGNFI. Catalysis depends on residues Asp-118 and Asp-136. A helical membrane pass occupies residues 131–151; that stretch reads IFNIADSSLTIGVILIIIALL.

This sequence belongs to the peptidase A8 family.

The protein resides in the cell membrane. It carries out the reaction Release of signal peptides from bacterial membrane prolipoproteins. Hydrolyzes -Xaa-Yaa-Zaa-|-(S,diacylglyceryl)Cys-, in which Xaa is hydrophobic (preferably Leu), and Yaa (Ala or Ser) and Zaa (Gly or Ala) have small, neutral side chains.. It participates in protein modification; lipoprotein biosynthesis (signal peptide cleavage). Its function is as follows. This protein specifically catalyzes the removal of signal peptides from prolipoproteins. The protein is Lipoprotein signal peptidase of Staphylococcus aureus (strain Mu3 / ATCC 700698).